The sequence spans 314 residues: tRNA dimethylallyltransferase (314 aa).

13–20 serves as a coordination point for ATP; the sequence is GPTAVGKT. 15 to 20 serves as a coordination point for substrate; that stretch reads TAVGKT. The tract at residues 38–41 is interaction with substrate tRNA; sequence DSMQ.

This sequence belongs to the IPP transferase family. In terms of assembly, monomer. It depends on Mg(2+) as a cofactor.

It catalyses the reaction adenosine(37) in tRNA + dimethylallyl diphosphate = N(6)-dimethylallyladenosine(37) in tRNA + diphosphate. Functionally, catalyzes the transfer of a dimethylallyl group onto the adenine at position 37 in tRNAs that read codons beginning with uridine, leading to the formation of N6-(dimethylallyl)adenosine (i(6)A). This is tRNA dimethylallyltransferase from Bacillus licheniformis (strain ATCC 14580 / DSM 13 / JCM 2505 / CCUG 7422 / NBRC 12200 / NCIMB 9375 / NCTC 10341 / NRRL NRS-1264 / Gibson 46).